Consider the following 334-residue polypeptide: Delta(1)-pyrroline-2-carboxylate/Delta(1)-piperideine-2-carboxylate reductase (334 aa).

Residue S44 is the Charge relay system of the active site. The Proton donor role is filled by H45. R49 lines the substrate pocket. 117–121 is a binding site for NADP(+); that stretch reads HFSAL. T157 contacts substrate. Residue 175-177 participates in NADP(+) binding; sequence DFA. Residue 183 to 184 coordinates substrate; that stretch reads RG. The active-site Charge relay system is E185. Residues 226 to 227 and 301 to 307 contribute to the NADP(+) site; these read HK and RLPSQRR.

This sequence belongs to the LDH2/MDH2 oxidoreductase family. Homodimer.

It catalyses the reaction L-pipecolate + NADP(+) = Delta(1)-piperideine-2-carboxylate + NADPH + H(+). It carries out the reaction L-proline + NADP(+) = 1-pyrroline-2-carboxylate + NADPH + H(+). The catalysed reaction is cis-4-hydroxy-L-proline + NADP(+) = Delta(1)-pyrroline-(4S)-hydroxy-2-carboxylate + NADPH + 2 H(+). Catalyzes the reduction of both Delta(1)-pyrroline-2-carboxylate (Pyr2C) and Delta(1)-piperideine-2-carboxylate (Pip2C) to L-proline and L-pipecolate, respectively, using NADPH as the electron donor. Cannot use NADH instead of NADPH. Is likely involved in a degradation pathway that converts trans-3-hydroxy-L-proline (t3LHyp) to L-proline, which would allow P.aeruginosa to grow on t3LHyp as a sole carbon source. Can also catalyze the reverse oxidation reactions, albeit at a much lower rate. Is also able to use Delta(1)-pyrroline-(4S)-hydroxy-2-carboxylate (Pyr4SH2C) and cis-4-hydroxy-L-proline (c4LHyp) as substrates, and might be involved in the metabolism of c4LHyp, a compound which is generated by the hydroxylation of free L-proline in bacteria. The sequence is that of Delta(1)-pyrroline-2-carboxylate/Delta(1)-piperideine-2-carboxylate reductase from Pseudomonas aeruginosa (strain ATCC 15692 / DSM 22644 / CIP 104116 / JCM 14847 / LMG 12228 / 1C / PRS 101 / PAO1).